The sequence spans 83 residues: Mu-theraphotoxin-Hhn2l (83 aa).

The signal sequence occupies residues 1–21 (MKASMFLALAGLVLLFVVGYA). Residues 22 to 48 (SESEEKEFPIELLSKIFAVDVFKGEER) constitute a propeptide that is removed on maturation. 3 disulfides stabilise this stretch: Cys50/Cys65, Cys57/Cys70, and Cys64/Cys77. Residue Leu81 is modified to Leucine amide.

It belongs to the neurotoxin 10 (Hwtx-1) family. 15 (Hntx-3) subfamily. Monomer. Expressed by the venom gland.

The protein localises to the secreted. Lethal neurotoxin. Selectively blocks tetrodotoxin-sensitive voltage-gated sodium channels (Nav). Does not affect tetrodotoxin-resistant voltage-gated sodium channels or calcium channels. This is Mu-theraphotoxin-Hhn2l from Cyriopagopus hainanus (Chinese bird spider).